The sequence spans 239 residues: Proteasome subunit beta (239 aa).

A compositionally biased stretch (polar residues) spans 1-16; it reads MRQPDSSLPRTGQDHT. Residues 1-32 are disordered; the sequence is MRQPDSSLPRTGQDHTLSPYEPELGEVPSNDL. The propeptide at 1 to 44 is removed in mature form; by autocatalysis; the sequence is MRQPDSSLPRTGQDHTLSPYEPELGEVPSNDLSMADLDNVNKTG. Residue threonine 45 is the Nucleophile of the active site.

Belongs to the peptidase T1B family. In terms of assembly, the 20S proteasome core is composed of 14 alpha and 14 beta subunits that assemble into four stacked heptameric rings, resulting in a barrel-shaped structure. The two inner rings, each composed of seven catalytic beta subunits, are sandwiched by two outer rings, each composed of seven alpha subunits. The catalytic chamber with the active sites is on the inside of the barrel. Has a gated structure, the ends of the cylinder being occluded by the N-termini of the alpha-subunits. Is capped at one or both ends by the proteasome regulatory ATPase, PAN.

The protein resides in the cytoplasm. The enzyme catalyses Cleavage of peptide bonds with very broad specificity.. Its activity is regulated as follows. The formation of the proteasomal ATPase PAN-20S proteasome complex, via the docking of the C-termini of PAN into the intersubunit pockets in the alpha-rings, triggers opening of the gate for substrate entry. Interconversion between the open-gate and close-gate conformations leads to a dynamic regulation of the 20S proteasome proteolysis activity. Its function is as follows. Component of the proteasome core, a large protease complex with broad specificity involved in protein degradation. This Natronomonas pharaonis (strain ATCC 35678 / DSM 2160 / CIP 103997 / JCM 8858 / NBRC 14720 / NCIMB 2260 / Gabara) (Halobacterium pharaonis) protein is Proteasome subunit beta.